We begin with the raw amino-acid sequence, 105 residues long: UPF0045 protein ECM15 (105 aa).

The protein belongs to the UPF0045 family.

The sequence is that of UPF0045 protein ECM15 (ECM15) from Eremothecium gossypii (strain ATCC 10895 / CBS 109.51 / FGSC 9923 / NRRL Y-1056) (Yeast).